A 345-amino-acid polypeptide reads, in one-letter code: Nuclear distribution protein nudE-like 1 (345 aa).

The stretch at Gln28–Val190 forms a coiled coil. The interval Val56 to Ser166 is self-association. Residues Asp64–Glu189 are interaction with KATNB1. A required for interaction with PAFAH1B1 region spans residues Tyr114–Ile133. Residues Arg175 to Val345 form an interaction with CENPF region. Residues Glu189 to Val256 form an interaction with YWHAE region. Residues Thr191 to Val345 are interaction with NEFL. The interaction with KATNA1 stretch occupies residues Ala195–Val256. Ser215 is subject to Phosphoserine. Residues Pro217 to Gly240 form a disordered region. At Thr219 the chain carries Phosphothreonine. Phosphoserine is present on Ser231. The interval Thr241–Gln280 is interaction with DISC1. Ser242 carries the post-translational modification Phosphoserine; by CDK1. Thr245 carries the phosphothreonine; by CDK1 and MAPK1 modification. The tract at residues Val256–Val291 is required for localization to the centrosome and interaction with dynein, dynactin, tubulin gamma, PCM1 and PCNT. The S-palmitoyl cysteine; by ZDHHC2, ZDHHC3 and ZDHHC7 moiety is linked to residue Cys273. The segment at Lys314–Val345 is disordered. The span at Leu329–Gly339 shows a compositional bias: low complexity. Residue Ser344 is modified to Phosphoserine.

The protein belongs to the nudE family. In terms of assembly, interacts with PLEKHM1 (via N- and C-terminus). Interacts with dynactin, PCM1 and PCNT. Interacts (via C-terminus) with CENPF. Self-associates. Interacts with DISC1, dynein, tubulin gamma, KATNA1, KATNB1, microtubules, PAFAHB1 and YWHAE. Interacts directly with NEFL and indirectly with NEFH. Interacts with ZNF365. Interacts with GTP-bound RAB9A; the interaction may lead to RAB9A-dynein motor tethering. In terms of processing, phosphorylated by CDK1 and MAPK1. Phosphorylated in mitosis. Phosphorylated by CDK5. Phosphorylation by CDK5 promotes interaction with KATNA1 and YWHAE. Post-translationally, palmitoylation at Cys-273 reduces affinity for dynein. As to expression, expressed in brain, liver, lung and testis (at protein level). Expressed in brain, epididymis, eye, heart, kidney, large intestine, liver, ovary, pancreas, prostate, skeletal muscle, smooth muscle, spleen, submaxillary gland, testis, thymus and thyroid. Within the brain expression is pronounced in the cortex, hippocampus, olfactory bulb, striatum, thalamic and hypothalamic structures and in the molecular layer of the cerebellum. Largely excluded from cortical progenitor cells which express NDE1.

The protein resides in the cytoplasm. It localises to the cytoskeleton. It is found in the microtubule organizing center. The protein localises to the centrosome. Its subcellular location is the chromosome. The protein resides in the centromere. It localises to the kinetochore. It is found in the spindle. Its function is as follows. Required for organization of the cellular microtubule array and microtubule anchoring at the centrosome. May regulate microtubule organization at least in part by targeting the microtubule severing protein KATNA1 to the centrosome. Also positively regulates the activity of the minus-end directed microtubule motor protein dynein. May enhance dynein-mediated microtubule sliding by targeting dynein to the microtubule plus ends. Required for several dynein- and microtubule-dependent processes such as the maintenance of Golgi integrity, the centripetal motion of secretory vesicles and the coupling of the nucleus and centrosome. Also required during brain development for the migration of newly formed neurons from the ventricular/subventricular zone toward the cortical plate. Plays a role, together with DISC1, in the regulation of neurite outgrowth. Required for mitosis in some cell types but appears to be dispensible for mitosis in cortical neuronal progenitors, which instead requires NDE1. Facilitates the polymerization of neurofilaments from the individual subunits NEFH and NEFL. Positively regulates lysosome peripheral distribution and ruffled border formation in osteoclasts. Plays a role, together with DISC1, in the regulation of neurite outgrowth. May act as a RAB9A/B effector that tethers RAB9-associated late endosomes to the dynein motor for their retrograde transport to the trans-Golgi network. In Mus musculus (Mouse), this protein is Nuclear distribution protein nudE-like 1.